The primary structure comprises 228 residues: Extracellular protease inhibitor 10 (228 aa).

An N-terminal signal peptide occupies residues 1–22; that stretch reads MKSAFTLSLALVAVTATISAAA. 3 consecutive Kazal-like domains span residues 23-72, 90-127, and 156-208; these read DDNC…ECAS, TSGT…AKCK, and GYQG…EGTL. Asn25 carries N-linked (GlcNAc...) asparagine glycosylation. 3 disulfide bridges follow: Cys26-Cys56, Cys30-Cys49, and Cys38-Cys70. Residues 69–92 form a disordered region; it reads ECASTPASSATPSPVTSSTGSTSG. The span at 71-92 shows a compositional bias: low complexity; that stretch reads ASTPASSATPSPVTSSTGSTSG. Cystine bridges form between Cys96–Cys126, Cys100–Cys119, Cys162–Cys193, and Cys167–Cys186. The N-linked (GlcNAc...) asparagine glycan is linked to Asn199.

As to quaternary structure, interacts with host subtilisin-like protease P69B.

It localises to the secreted. Its function is as follows. Secreted effector that interacts with and inhibits the pathogenesis-related P69B subtilisin-like serine protease of host tomato. Inhibition of host proteases by a pathogen extracellular protease inhibitor forms a specific type of defense-counterdefense mechanism between plants and microbial pathogens. This chain is Extracellular protease inhibitor 10, found in Phytophthora infestans (strain T30-4) (Potato late blight agent).